The sequence spans 196 residues: MAFKDWMNNLRDYFVEDDEEFNEPTRPVQESRPTVASTPKPKVEERKVQADYQSRRPAQTTPKPQTQTAAPKRSASTFSKPMPEKIVQQQTVSQAQSLAATVSTIAIKEPRAYADIMESARIVKNGECVLVNFKFMGDAQARRSIDFMTGVVFTLDGDIQNVGGQIFLMTPANITVDAAKEMSILAGQNFESYDIY.

Positions 15–80 (VEDDEEFNEP…PKRSASTFSK (66 aa)) are disordered. Residues 57–72 (PAQTTPKPQTQTAAPK) are compositionally biased toward low complexity.

It belongs to the SepF family. In terms of assembly, homodimer. Interacts with FtsZ.

Its subcellular location is the cytoplasm. Its function is as follows. Cell division protein that is part of the divisome complex and is recruited early to the Z-ring. Probably stimulates Z-ring formation, perhaps through the cross-linking of FtsZ protofilaments. Its function overlaps with FtsA. This chain is Cell division protein SepF, found in Lactococcus lactis subsp. cremoris (strain MG1363).